Consider the following 177-residue polypeptide: Tubulin beta chain (177 aa).

Residues Y156–A177 form a disordered region. The span at T160 to A177 shows a compositional bias: acidic residues.

The protein belongs to the tubulin family. Dimer of alpha and beta chains. A typical microtubule is a hollow water-filled tube with an outer diameter of 25 nm and an inner diameter of 15 nM. Alpha-beta heterodimers associate head-to-tail to form protofilaments running lengthwise along the microtubule wall with the beta-tubulin subunit facing the microtubule plus end conferring a structural polarity. Microtubules usually have 13 protofilaments but different protofilament numbers can be found in some organisms and specialized cells. It depends on Mg(2+) as a cofactor.

Its subcellular location is the cytoplasm. It is found in the cytoskeleton. Functionally, tubulin is the major constituent of microtubules, a cylinder consisting of laterally associated linear protofilaments composed of alpha- and beta-tubulin heterodimers. Microtubules grow by the addition of GTP-tubulin dimers to the microtubule end, where a stabilizing cap forms. Below the cap, tubulin dimers are in GDP-bound state, owing to GTPase activity of alpha-tubulin. The protein is Tubulin beta chain of Lytechinus pictus (Painted sea urchin).